Here is a 265-residue protein sequence, read N- to C-terminus: Glutamate racemase (265 aa).

Substrate is bound by residues 9–10 (DS) and 41–42 (YS). C73 acts as the Proton donor/acceptor in catalysis. Residue 74 to 75 (NT) coordinates substrate. C184 serves as the catalytic Proton donor/acceptor. 185-186 (TH) provides a ligand contact to substrate.

This sequence belongs to the aspartate/glutamate racemases family.

The enzyme catalyses L-glutamate = D-glutamate. It functions in the pathway cell wall biogenesis; peptidoglycan biosynthesis. Its function is as follows. Provides the (R)-glutamate required for cell wall biosynthesis. This chain is Glutamate racemase, found in Actinobacillus pleuropneumoniae serotype 3 (strain JL03).